The following is a 177-amino-acid chain: Mediator of RNA polymerase II transcription subunit 6 (177 aa).

Belongs to the Mediator complex subunit 6 family. Component of the Mediator complex.

The protein resides in the nucleus. In terms of biological role, component of the Mediator complex, a coactivator involved in the regulated transcription of nearly all RNA polymerase II-dependent genes. Mediator functions as a bridge to convey information from gene-specific regulatory proteins to the basal RNA polymerase II transcription machinery. Mediator is recruited to promoters by direct interactions with regulatory proteins and serves as a scaffold for the assembly of a functional preinitiation complex with RNA polymerase II and the general transcription factors. This is Mediator of RNA polymerase II transcription subunit 6 (MED6) from Encephalitozoon cuniculi (strain GB-M1) (Microsporidian parasite).